A 176-amino-acid chain; its full sequence is Shikimate kinase (176 aa).

14–19 (GAGKST) serves as a coordination point for ATP. Residue Ser-18 participates in Mg(2+) binding. 3 residues coordinate substrate: Asp-36, Arg-60, and Gly-83. Arg-121 serves as a coordination point for ATP. Arg-140 is a binding site for substrate.

It belongs to the shikimate kinase family. As to quaternary structure, monomer. The cofactor is Mg(2+).

Its subcellular location is the cytoplasm. It catalyses the reaction shikimate + ATP = 3-phosphoshikimate + ADP + H(+). Its pathway is metabolic intermediate biosynthesis; chorismate biosynthesis; chorismate from D-erythrose 4-phosphate and phosphoenolpyruvate: step 5/7. Functionally, catalyzes the specific phosphorylation of the 3-hydroxyl group of shikimic acid using ATP as a cosubstrate. The polypeptide is Shikimate kinase (Francisella tularensis subsp. tularensis (strain FSC 198)).